The sequence spans 141 residues: Large ribosomal subunit protein uL16 (141 aa).

Residues 1–23 are disordered; that stretch reads MLMPKRTKYRKQMKGRNRGKAHR.

It belongs to the universal ribosomal protein uL16 family. As to quaternary structure, part of the 50S ribosomal subunit.

Functionally, binds 23S rRNA and is also seen to make contacts with the A and possibly P site tRNAs. The polypeptide is Large ribosomal subunit protein uL16 (Helicobacter pylori (strain J99 / ATCC 700824) (Campylobacter pylori J99)).